A 1072-amino-acid polypeptide reads, in one-letter code: Integrator complex subunit 3 homolog (1072 aa).

Disordered regions lie at residues 920–941 and 1002–1072; these read YPSSSPNKRKRPPKGISVSTSI and DTTV…NDSD. A phosphoserine mark is found at serine 1042, serine 1043, serine 1047, and serine 1048.

This sequence belongs to the Integrator subunit 3 family. Belongs to the multiprotein complex Integrator, at least composed of IntS1, IntS2, IntS3, IntS4, omd/IntS5, IntS6, defl/IntS7, IntS8, IntS9, IntS10, IntS11, IntS12, asun/IntS13, IntS14 and IntS15. The core complex associates with protein phosphatase 2A subunits mts/PP2A and Pp2A-29B, to form the Integrator-PP2A (INTAC) complex.

It is found in the nucleus. Its subcellular location is the cytoplasm. Component of the integrator complex, a multiprotein complex that terminates RNA polymerase II (Pol II) transcription in the promoter-proximal region of genes. The integrator complex provides a quality checkpoint during transcription elongation by driving premature transcription termination of transcripts that are unfavorably configured for transcriptional elongation: the complex terminates transcription by (1) catalyzing dephosphorylation of the C-terminal domain (CTD) of Pol II subunit Polr2A/Rbp1 and Spt5, and (2) degrading the exiting nascent RNA transcript via endonuclease activity. The integrator complex is also involved in the 3'-end processing of the U7 snRNA, and also the spliceosomal snRNAs U1, U2, U4 and U5. The sequence is that of Integrator complex subunit 3 homolog (IntS3) from Drosophila erecta (Fruit fly).